Reading from the N-terminus, the 137-residue chain is uncharacterized protein (137 aa).

The first 21 residues, 1 to 21 (MFNRRVLFLSVFSCAVFMLSG), serve as a signal peptide directing secretion. A lipid anchor (N-palmitoyl cysteine) is attached at Cys-22. Cys-22 carries S-diacylglycerol cysteine lipidation.

The protein resides in the membrane. This is an uncharacterized protein from Escherichia coli (strain K12).